A 358-amino-acid chain; its full sequence is Cholesterol galactosyltransferase (358 aa).

It belongs to the glycosyltransferase 2 family.

It carries out the reaction cholesterol + UDP-alpha-D-galactose = cholesteryl 3-beta-D-galactoside + UDP + H(+). Its pathway is glycolipid biosynthesis. Its function is as follows. Galactosyltransferase involved in the synthesis of cholesterol glycolipids, which are formed by the use of host-derived cholesterol and have been shown to be immunogenic, and possibly contribute to Lyme disease pathogenesis. Catalyzes the formation of cholesteryl beta-D-galactopyranoside (CGal) from cholesterol and UDP-alpha-D-galactose. Cannot use GDP-mannose. This Borreliella burgdorferi (strain ATCC 35210 / DSM 4680 / CIP 102532 / B31) (Borrelia burgdorferi) protein is Cholesterol galactosyltransferase.